The following is a 219-amino-acid chain: 7-cyano-7-deazaguanine synthase (219 aa).

10 to 20 contributes to the ATP binding site; that stretch reads FSGGQDSTTCL. Positions 188, 197, 200, and 203 each coordinate Zn(2+).

This sequence belongs to the QueC family. It depends on Zn(2+) as a cofactor.

The enzyme catalyses 7-carboxy-7-deazaguanine + NH4(+) + ATP = 7-cyano-7-deazaguanine + ADP + phosphate + H2O + H(+). The protein operates within purine metabolism; 7-cyano-7-deazaguanine biosynthesis. Its function is as follows. Catalyzes the ATP-dependent conversion of 7-carboxy-7-deazaguanine (CDG) to 7-cyano-7-deazaguanine (preQ(0)). This chain is 7-cyano-7-deazaguanine synthase, found in Bacteroides fragilis (strain ATCC 25285 / DSM 2151 / CCUG 4856 / JCM 11019 / LMG 10263 / NCTC 9343 / Onslow / VPI 2553 / EN-2).